Consider the following 102-residue polypeptide: Urease subunit beta (102 aa).

The protein belongs to the urease beta subunit family. In terms of assembly, heterotrimer of UreA (gamma), UreB (beta) and UreC (alpha) subunits. Three heterotrimers associate to form the active enzyme.

Its subcellular location is the cytoplasm. It carries out the reaction urea + 2 H2O + H(+) = hydrogencarbonate + 2 NH4(+). The protein operates within nitrogen metabolism; urea degradation; CO(2) and NH(3) from urea (urease route): step 1/1. This chain is Urease subunit beta, found in Pseudomonas syringae pv. tomato (strain ATCC BAA-871 / DC3000).